A 691-amino-acid chain; its full sequence is Lipase 2 (691 aa).

The N-terminal stretch at 1–37 (MLRGQEERKYSIRKYSIGVVSVLAATMFVVTSHEAQA) is a signal peptide. Residues 34-267 (EAQASEKIPT…KPTDKNTDNK (234 aa)) form a disordered region. A propeptide spanning residues 38–296 (SEKIPTTNAA…ADAKKVRPLK (259 aa)) is cleaved from the precursor. The segment covering 41–72 (IPTTNAAAQKETLNQPGEQGNAITSHQMQSGK) has biased composition (polar residues). Residues 73–82 (QLDDMHKENG) show a composition bias toward basic and acidic residues. Composition is skewed to polar residues over residues 94 to 115 (LQSS…NDNQ), 125 to 135 (SKQSHQNNATN), 142 to 172 (DQIQ…QPSI), and 186 to 196 (PTSTTPPSNDK). 2 stretches are compositionally biased toward basic and acidic residues: residues 197–214 (TAPK…KHPN) and 258–267 (KPTDKNTDNK). Serine 413 acts as the Nucleophile in catalysis. Glycine 580 is a Ca(2+) binding site. Aspartate 604 (charge relay system) is an active-site residue. Aspartate 645 is a binding site for Ca(2+). Histidine 646 (charge relay system) is an active-site residue. The Ca(2+) site is built by aspartate 648, aspartate 653, and aspartate 656.

This sequence belongs to the AB hydrolase superfamily. Lipase family.

It is found in the secreted. The enzyme catalyses a triacylglycerol + H2O = a diacylglycerol + a fatty acid + H(+). This Staphylococcus aureus (strain MRSA252) protein is Lipase 2 (lip2).